A 432-amino-acid chain; its full sequence is Glutamate-1-semialdehyde 2,1-aminomutase 1 (432 aa).

Lysine 272 is subject to N6-(pyridoxal phosphate)lysine.

Belongs to the class-III pyridoxal-phosphate-dependent aminotransferase family. HemL subfamily. Homodimer. Pyridoxal 5'-phosphate serves as cofactor.

It localises to the cytoplasm. The catalysed reaction is (S)-4-amino-5-oxopentanoate = 5-aminolevulinate. The protein operates within porphyrin-containing compound metabolism; protoporphyrin-IX biosynthesis; 5-aminolevulinate from L-glutamyl-tRNA(Glu): step 2/2. The protein is Glutamate-1-semialdehyde 2,1-aminomutase 1 of Exiguobacterium sp. (strain ATCC BAA-1283 / AT1b).